Reading from the N-terminus, the 783-residue chain is Isoamylase 1, chloroplastic (783 aa).

A chloroplast-targeting transit peptide spans Met-1–Ser-43. The active-site Nucleophile is the Asp-410. Glu-466 acts as the Proton donor in catalysis.

Belongs to the glycosyl hydrolase 13 family. Associates with ISA2 to form the heteromultimeric complex Iso1 required for amylopectin synthesis.

It is found in the plastid. The protein localises to the chloroplast. The enzyme catalyses Hydrolysis of (1-&gt;6)-alpha-D-glucosidic branch linkages in glycogen, amylopectin and their beta-limit dextrins.. It participates in glycan biosynthesis; starch biosynthesis. Functionally, involved in the trimming of pre-amylopectin chains. Accelerates the crystallization of nascent amylopectin molecules during starch synthesis. ISA1 and ISA2 work exclusively together as a multimeric holoenzyme. ISA1-ISA2 removes preferentially branches that are very close to other branches. Promotes negative gravitropic responses in shoots by facilitating starch granules (statoliths) formation in hypocotyls. The protein is Isoamylase 1, chloroplastic of Arabidopsis thaliana (Mouse-ear cress).